The primary structure comprises 498 residues: UDP-N-acetylmuramate--L-alanine ligase (498 aa).

ATP is bound at residue G133–T139.

The protein belongs to the MurCDEF family.

It localises to the cytoplasm. It catalyses the reaction UDP-N-acetyl-alpha-D-muramate + L-alanine + ATP = UDP-N-acetyl-alpha-D-muramoyl-L-alanine + ADP + phosphate + H(+). The protein operates within cell wall biogenesis; peptidoglycan biosynthesis. Functionally, cell wall formation. This chain is UDP-N-acetylmuramate--L-alanine ligase, found in Wolbachia pipientis wMel.